The primary structure comprises 258 residues: Imidazole glycerol phosphate synthase subunit HisF (258 aa).

Active-site residues include aspartate 11 and aspartate 130.

Belongs to the HisA/HisF family. In terms of assembly, heterodimer of HisH and HisF.

Its subcellular location is the cytoplasm. The enzyme catalyses 5-[(5-phospho-1-deoxy-D-ribulos-1-ylimino)methylamino]-1-(5-phospho-beta-D-ribosyl)imidazole-4-carboxamide + L-glutamine = D-erythro-1-(imidazol-4-yl)glycerol 3-phosphate + 5-amino-1-(5-phospho-beta-D-ribosyl)imidazole-4-carboxamide + L-glutamate + H(+). It participates in amino-acid biosynthesis; L-histidine biosynthesis; L-histidine from 5-phospho-alpha-D-ribose 1-diphosphate: step 5/9. IGPS catalyzes the conversion of PRFAR and glutamine to IGP, AICAR and glutamate. The HisF subunit catalyzes the cyclization activity that produces IGP and AICAR from PRFAR using the ammonia provided by the HisH subunit. The polypeptide is Imidazole glycerol phosphate synthase subunit HisF (Shigella sonnei (strain Ss046)).